The following is a 518-amino-acid chain: GMP synthase [glutamine-hydrolyzing] (518 aa).

Residues 11–203 (KIIVLDFGSQ…AFDVCQARSN (193 aa)) enclose the Glutamine amidotransferase type-1 domain. The active-site Nucleophile is cysteine 88. Active-site residues include histidine 177 and glutamate 179. The region spanning 204 to 393 (WSMDDFIDMQ…LGMPHELVWR (190 aa)) is the GMPS ATP-PPase domain. ATP is bound at residue 231 to 237 (SGGVDSS).

In terms of assembly, homodimer.

The enzyme catalyses XMP + L-glutamine + ATP + H2O = GMP + L-glutamate + AMP + diphosphate + 2 H(+). Its pathway is purine metabolism; GMP biosynthesis; GMP from XMP (L-Gln route): step 1/1. Its function is as follows. Catalyzes the synthesis of GMP from XMP. This Ligilactobacillus salivarius (strain UCC118) (Lactobacillus salivarius) protein is GMP synthase [glutamine-hydrolyzing].